Reading from the N-terminus, the 390-residue chain is MINRVIWIVLDSVGMGALPDADKYGDVGANTIGNVSKFLGGLKTPNMSKLGLGNIDEIKGIEKVESPIGCYARFKEMSNGKDTTTGHWEMVGINSEQAFPTYPNGFPRDLIEKFEELTGRKVIGNKTASGTEIIKELGEEHVKTGALIVYTSADSVFQIAAHEEVVPLDELYKICEIARNLLTGEHAVARVIARPFEGEVGSFTRTSNRRDFSLVPPYDTVLDNLKKNNLNVMAVGKIEDIFSGKGVTEAVHTKDNMDGVDKTLEYMKEDKKGLIFTNLVDFDMKWGHRNDAEAYGKGIEAFDVRLGEILNEMKDTDVLFITADHGCDPTMPGTDHSREHVPFLAYGKALKENVNLGTRESFADMGQTIAEIFDVEPIRHGKSFLKEIVK.

The Mn(2+) site is built by D11, D283, H288, D324, H325, and H336.

This sequence belongs to the phosphopentomutase family. Mn(2+) serves as cofactor.

It localises to the cytoplasm. The catalysed reaction is 2-deoxy-alpha-D-ribose 1-phosphate = 2-deoxy-D-ribose 5-phosphate. The enzyme catalyses alpha-D-ribose 1-phosphate = D-ribose 5-phosphate. Its pathway is carbohydrate degradation; 2-deoxy-D-ribose 1-phosphate degradation; D-glyceraldehyde 3-phosphate and acetaldehyde from 2-deoxy-alpha-D-ribose 1-phosphate: step 1/2. Functionally, isomerase that catalyzes the conversion of deoxy-ribose 1-phosphate (dRib-1-P) and ribose 1-phosphate (Rib-1-P) to deoxy-ribose 5-phosphate (dRib-5-P) and ribose 5-phosphate (Rib-5-P), respectively. In Clostridium novyi (strain NT), this protein is Phosphopentomutase.